The following is a 116-amino-acid chain: Putative iron-sulfur cluster insertion protein ErpA (116 aa).

Iron-sulfur cluster is bound by residues Cys44, Cys108, and Cys110.

Belongs to the HesB/IscA family. As to quaternary structure, homodimer. Requires iron-sulfur cluster as cofactor.

In terms of biological role, required for insertion of 4Fe-4S clusters. The protein is Putative iron-sulfur cluster insertion protein ErpA of Janthinobacterium sp. (strain Marseille) (Minibacterium massiliensis).